The chain runs to 258 residues: Small ribosomal subunit protein mS35 (258 aa).

A mitochondrion-targeting transit peptide spans 1 to 39 (MAFNPLLSLLKADAIFLGQLSKSSFCATSRAFSVFYFTR).

Belongs to the mitochondrion-specific ribosomal protein mS35 family. Component of the mitochondrial small ribosomal subunit (mt-SSU). Mature yeast 74S mitochondrial ribosomes consist of a small (37S) and a large (54S) subunit. The 37S small subunit contains a 15S ribosomal RNA (15S mt-rRNA) and at least 32 different proteins. The 54S large subunit contains a 21S rRNA (21S mt-rRNA) and at least 45 different proteins.

It is found in the mitochondrion. In terms of biological role, component of the mitochondrial ribosome (mitoribosome), a dedicated translation machinery responsible for the synthesis of mitochondrial genome-encoded proteins, including at least some of the essential transmembrane subunits of the mitochondrial respiratory chain. The mitoribosomes are attached to the mitochondrial inner membrane and translation products are cotranslationally integrated into the membrane. The sequence is that of Small ribosomal subunit protein mS35 (rsm24) from Schizosaccharomyces pombe (strain 972 / ATCC 24843) (Fission yeast).